A 597-amino-acid polypeptide reads, in one-letter code: Fructan 1-exohydrolase w1 (597 aa).

An N-terminal signal peptide occupies residues 1 to 20; sequence MAQAWAFLLPVLVFGSYVTS. Asp-76 is a catalytic residue. 3 N-linked (GlcNAc...) asparagine glycosylation sites follow: Asn-169, Asn-237, and Asn-249. Cys-447 and Cys-493 are disulfide-bonded. The N-linked (GlcNAc...) asparagine glycan is linked to Asn-568.

Belongs to the glycosyl hydrolase 32 family.

The enzyme catalyses Hydrolysis of terminal, non-reducing (2-&gt;1)-linked beta-D-fructofuranose residues in fructans.. Its activity is regulated as follows. Inhibited by sucrose. Hydrolyzes inulin-type beta-(2,1)-fructans and beta-(2,1)-linkages in branched fructans. Has low activity against beta-(2,6)-linked fructans. May play a role as a beta-(2,1)-trimmer during graminan biosynthesis. The protein is Fructan 1-exohydrolase w1 of Triticum aestivum (Wheat).